Reading from the N-terminus, the 255-residue chain is Adenosine 5'-phosphosulfate reductase (255 aa).

The disordered stretch occupies residues 1-39 (MMTAEVRTPEQGGGPLTTEPRAPRSAPGHADASAPAFGP). Positions 137, 138, 220, and 223 each coordinate [4Fe-4S] cluster. Cysteine 246 (nucleophile; cysteine thiosulfonate intermediate) is an active-site residue.

It belongs to the PAPS reductase family. CysH subfamily. [4Fe-4S] cluster is required as a cofactor.

It localises to the cytoplasm. The catalysed reaction is [thioredoxin]-disulfide + sulfite + AMP + 2 H(+) = adenosine 5'-phosphosulfate + [thioredoxin]-dithiol. It participates in sulfur metabolism; hydrogen sulfide biosynthesis; sulfite from sulfate. Catalyzes the formation of sulfite from adenosine 5'-phosphosulfate (APS) using thioredoxin as an electron donor. The chain is Adenosine 5'-phosphosulfate reductase from Deinococcus radiodurans (strain ATCC 13939 / DSM 20539 / JCM 16871 / CCUG 27074 / LMG 4051 / NBRC 15346 / NCIMB 9279 / VKM B-1422 / R1).